A 334-amino-acid chain; its full sequence is Holliday junction branch migration complex subunit RuvB (334 aa).

The segment at 1-181 (MSEFLTPERT…GIILELDFYT (181 aa)) is large ATPase domain (RuvB-L). ADP is bound by residues Leu19 and Arg20. ATP-binding residues include Glu26, Phe27, and Ile28. Positions 27, 28, 61, 62, 63, 64, 65, and 66 each coordinate ADP. ATP contacts are provided by Leu62 and Gly63. ATP is bound by residues 127 to 129 (EDF) and Arg170. 3 residues coordinate ADP: Tyr180, Pro216, and Arg217. A small ATPAse domain (RuvB-S) region spans residues 182–255 (VKELKEIIKR…TMEVLNIDDE (74 aa)). ATP is bound at residue Pro216. A head domain (RuvB-H) region spans residues 256–334 (GLDEFDRKIL…KYEVPENRLF (79 aa)). DNA-binding residues include Arg309 and Arg314.

The protein belongs to the RuvB family. Homohexamer. Forms an RuvA(8)-RuvB(12)-Holliday junction (HJ) complex. HJ DNA is sandwiched between 2 RuvA tetramers; dsDNA enters through RuvA and exits via RuvB. An RuvB hexamer assembles on each DNA strand where it exits the tetramer. Each RuvB hexamer is contacted by two RuvA subunits (via domain III) on 2 adjacent RuvB subunits; this complex drives branch migration. In the full resolvosome a probable DNA-RuvA(4)-RuvB(12)-RuvC(2) complex forms which resolves the HJ.

The protein localises to the cytoplasm. It catalyses the reaction ATP + H2O = ADP + phosphate + H(+). The RuvA-RuvB-RuvC complex processes Holliday junction (HJ) DNA during genetic recombination and DNA repair, while the RuvA-RuvB complex plays an important role in the rescue of blocked DNA replication forks via replication fork reversal (RFR). RuvA specifically binds to HJ cruciform DNA, conferring on it an open structure. The RuvB hexamer acts as an ATP-dependent pump, pulling dsDNA into and through the RuvAB complex. RuvB forms 2 homohexamers on either side of HJ DNA bound by 1 or 2 RuvA tetramers; 4 subunits per hexamer contact DNA at a time. Coordinated motions by a converter formed by DNA-disengaged RuvB subunits stimulates ATP hydrolysis and nucleotide exchange. Immobilization of the converter enables RuvB to convert the ATP-contained energy into a lever motion, pulling 2 nucleotides of DNA out of the RuvA tetramer per ATP hydrolyzed, thus driving DNA branch migration. The RuvB motors rotate together with the DNA substrate, which together with the progressing nucleotide cycle form the mechanistic basis for DNA recombination by continuous HJ branch migration. Branch migration allows RuvC to scan DNA until it finds its consensus sequence, where it cleaves and resolves cruciform DNA. In terms of biological role, promotes Holliday junction (HJ) branch migration in conjunction with RuvA. Subunits can be free, ADP- or ATP-bound; nucleotide binding changes during the reaction cycle. Has a DNA-dependent ATPase activity; dsDNA and supercoiled DNA but not ssDNA stimulate activity. This is Holliday junction branch migration complex subunit RuvB from Thermotoga maritima (strain ATCC 43589 / DSM 3109 / JCM 10099 / NBRC 100826 / MSB8).